The following is an 873-amino-acid chain: Protein SEY1 (873 aa).

Residues 1 to 750 (MVANGHFFAG…KRSAIGGITQ (750 aa)) are Cytoplasmic-facing. The GB1/RHD3-type G domain occupies 50–308 (GFNYHLISVF…IPADGFAVYA (259 aa)). 60-67 (GSQSTGKS) is a GTP binding site. The segment at 677–701 (LDKWIGHTPSSATPADEEDLTPIGG) is disordered. Positions 691-701 (ADEEDLTPIGG) are enriched in acidic residues. Residues 751–771 (VPLYFYGLLLALGWNEIVAVL) form a helical membrane-spanning segment. Topologically, residues 772–774 (RNP) are lumenal. Residues 775 to 795 (AYFLLLFVCAVTAYVTYQLNL) traverse the membrane as a helical segment. Topologically, residues 796-873 (WGPIIKMTEA…IDDADDDDDF (78 aa)) are cytoplasmic. The segment at 841–873 (EGYDMSNMKNRKSAGGYQNNRSHIDDADDDDDF) is disordered.

The protein belongs to the TRAFAC class dynamin-like GTPase superfamily. GB1/RHD3 GTPase family. RHD3 subfamily.

It is found in the endoplasmic reticulum membrane. In terms of biological role, cooperates with the reticulon proteins and tubule-shaping DP1 family proteins to generate and maintain the structure of the tubular endoplasmic reticulum network. Has GTPase activity, which is required for its function in ER organization. This Paracoccidioides lutzii (strain ATCC MYA-826 / Pb01) (Paracoccidioides brasiliensis) protein is Protein SEY1.